We begin with the raw amino-acid sequence, 23 residues long: Basic phospholipase A2 homolog (23 aa).

Contains 7 disulfide bonds. In terms of tissue distribution, expressed by the venom gland.

The protein resides in the secreted. The protein is Basic phospholipase A2 homolog of Trimeresurus stejnegeri (Chinese green tree viper).